Reading from the N-terminus, the 520-residue chain is Retinoic acid receptor RXR-beta (520 aa).

A disordered region spans residues 1 to 167 (MSWATRPPFL…GGSGPPEDVK (167 aa)). The segment at 1–191 (MSWATRPPFL…PGGPGAGKRL (191 aa)) is modulating. The residue at position 25 (Arg-25) is an Omega-N-methylarginine. A compositionally biased stretch (basic and acidic residues) spans 64-79 (EAGRDGMGDSGRDSRS). The segment covering 95–118 (SSPPGPPLTPSAPPPPMPPPPLGS) has biased composition (pro residues). Over residues 119–130 (PFPVISSSMGSP) the composition is skewed to low complexity. Positions 131–140 (GLPPPAPPGF) are enriched in pro residues. 2 NR C4-type zinc fingers span residues 192–212 (CAICGDRSSGKHYGVYSCEGC) and 228–252 (CRDNKDCTVDKRQRNRCQYCRYQKC). Positions 192–257 (CAICGDRSSG…RYQKCLATGM (66 aa)) form a DNA-binding region, nuclear receptor. The interval 258–382 (KREAVQEERQ…HRSIDVRDGI (125 aa)) is hinge. Basic and acidic residues predominate over residues 263-275 (QEERQRGKDKDGD). Disordered stretches follow at residues 263–285 (QEERQRGKDKDGDGDGAGGAPEE) and 300–323 (QKSDQGVEGPGATGGGGSSPNDPV). Residues 283 to 516 (PEEMPVDRIL…TFLMEMLEAP (234 aa)) enclose the NR LBD domain. A compositionally biased stretch (gly residues) spans 307–317 (EGPGATGGGGS).

The protein belongs to the nuclear hormone receptor family. NR2 subfamily. As to quaternary structure, homodimer (in vitro). Heterodimer with other retinoic acid receptor family members. Binds DNA preferentially as a RAR/RXR heterodimer. Interacts with NR1H3. Interacts with AKAP13. As to expression, in all tissues tested, including brain, thymus, spleen and liver.

Its subcellular location is the nucleus. The protein localises to the cytoplasm. Receptor for retinoic acid. Retinoic acid receptors bind as heterodimers to their target response elements in response to their ligands, all-trans or 9-cis retinoic acid, and regulate gene expression in various biological processes. The RAR/RXR heterodimers bind to the retinoic acid response elements (RARE). The sequence is that of Retinoic acid receptor RXR-beta (Rxrb) from Mus musculus (Mouse).